Reading from the N-terminus, the 400-residue chain is Aminomethyltransferase, mitochondrial (400 aa).

Glutamate 221, arginine 250, and tyrosine 397 together coordinate substrate.

Belongs to the GcvT family. As to quaternary structure, component of the glycine decarboxylase complex (GDC), which is composed of four proteins: P, T, L and H.

Its subcellular location is the mitochondrion. The catalysed reaction is N(6)-[(R)-S(8)-aminomethyldihydrolipoyl]-L-lysyl-[protein] + (6S)-5,6,7,8-tetrahydrofolate = N(6)-[(R)-dihydrolipoyl]-L-lysyl-[protein] + (6R)-5,10-methylene-5,6,7,8-tetrahydrofolate + NH4(+). Functionally, the glycine cleavage system (glycine decarboxylase complex) catalyzes the degradation of glycine. This Saccharomyces cerevisiae (strain ATCC 204508 / S288c) (Baker's yeast) protein is Aminomethyltransferase, mitochondrial (GCV1).